A 197-amino-acid chain; its full sequence is Signal peptidase complex catalytic subunit SEC11 (197 aa).

At 1–14 (MLSSLAPYMANPRQ) the chain is on the cytoplasmic side. The helical; Signal-anchor for type II membrane protein transmembrane segment at 15 to 33 (TLTQVLNFALVLSTAFMLW) threads the bilayer. Topologically, residues 34–197 (KGLSVVTNST…MGLMVVLQRE (164 aa)) are lumenal. An N-linked (GlcNAc...) asparagine glycan is attached at Asn41. Residues Ser53 and His92 each act as charge relay system in the active site. The segment covering 102–115 (PGREDKKSVKKGGE) has biased composition (basic and acidic residues). Residues 102–134 (PGREDKKSVKKGGEEGEETSSTPSQKLLTKGDN) form a disordered region. Asp139 acts as the Charge relay system in catalysis. The segment at 183 to 194 (VLLGFMGLMVVL) is C-terminal short (CTS) helix.

Belongs to the peptidase S26B family. In terms of assembly, component of the signal peptidase complex (SPC) composed of a catalytic subunit SEC11 and three accessory subunits SPC1, SPC2 and SPC3. The complex induces a local thinning of the ER membrane which is used to measure the length of the signal peptide (SP) h-region of protein substrates. This ensures the selectivity of the complex towards h-regions shorter than 18-20 amino acids. SPC associates with the translocon complex.

It localises to the endoplasmic reticulum membrane. It carries out the reaction Cleavage of hydrophobic, N-terminal signal or leader sequences from secreted and periplasmic proteins.. In terms of biological role, catalytic component of the signal peptidase complex (SPC) which catalyzes the cleavage of N-terminal signal sequences from nascent proteins as they are translocated into the lumen of the endoplasmic reticulum. Specifically cleaves N-terminal signal peptides that contain a hydrophobic alpha-helix (h-region) shorter than 18-20 amino acids. This Paracoccidioides lutzii (strain ATCC MYA-826 / Pb01) (Paracoccidioides brasiliensis) protein is Signal peptidase complex catalytic subunit SEC11 (SEC11).